The chain runs to 365 residues: MKKTALYHWHEQAGARIIDFGGYLMPVQYSGIIAEHRAVRSAAGLFDVSHMGNFYVTGERSEAFLQYMVTNDLSKVRDGEAQYNLMLYPNGGVVDDLIIYRLDSKTFFLIVNASNTEKDYAWLQQHIGAFDGVCLEDHTDRLSLIALQGPVAIDIVKTVFPSVDFDALLQFQFCRTLYGDAPVMIARTGYTGEKGVEICLPNEAALPLWEALYDAGRACGISPVGLGARDTLRLEMGYSLYGHEIDQDINPLEARLKWAVKMDKGSFIGREACQQVELHLTRGVAGFSIESRVLPRQHCKVYNTDRQEIGWVCSGTLSPTLQEPIGTCNIVRKYITSGDSVFVDVRGTLHKGEIRRLPFVKTSLG.

This sequence belongs to the GcvT family. As to quaternary structure, the glycine cleavage system is composed of four proteins: P, T, L and H.

It carries out the reaction N(6)-[(R)-S(8)-aminomethyldihydrolipoyl]-L-lysyl-[protein] + (6S)-5,6,7,8-tetrahydrofolate = N(6)-[(R)-dihydrolipoyl]-L-lysyl-[protein] + (6R)-5,10-methylene-5,6,7,8-tetrahydrofolate + NH4(+). The glycine cleavage system catalyzes the degradation of glycine. The chain is Aminomethyltransferase from Chlorobium phaeobacteroides (strain DSM 266 / SMG 266 / 2430).